Here is a 101-residue protein sequence, read N- to C-terminus: Small ribosomal subunit protein uS14 (101 aa).

Belongs to the universal ribosomal protein uS14 family. Part of the 30S ribosomal subunit. Contacts proteins S3 and S10.

Functionally, binds 16S rRNA, required for the assembly of 30S particles and may also be responsible for determining the conformation of the 16S rRNA at the A site. This Aliivibrio fischeri (strain ATCC 700601 / ES114) (Vibrio fischeri) protein is Small ribosomal subunit protein uS14.